Consider the following 234-residue polypeptide: Orotidine 5'-phosphate decarboxylase (234 aa).

Substrate is bound by residues aspartate 14, lysine 36, 63-72 (DLKFHDIPNT), threonine 123, arginine 184, glutamine 193, glycine 213, and arginine 214. Catalysis depends on lysine 65, which acts as the Proton donor.

The protein belongs to the OMP decarboxylase family. Type 1 subfamily. Homodimer.

The enzyme catalyses orotidine 5'-phosphate + H(+) = UMP + CO2. Its pathway is pyrimidine metabolism; UMP biosynthesis via de novo pathway; UMP from orotate: step 2/2. In terms of biological role, catalyzes the decarboxylation of orotidine 5'-monophosphate (OMP) to uridine 5'-monophosphate (UMP). The sequence is that of Orotidine 5'-phosphate decarboxylase from Pseudoalteromonas translucida (strain TAC 125).